A 594-amino-acid chain; its full sequence is Protein FAM200C (594 aa).

In Bos taurus (Bovine), this protein is Protein FAM200C (FAM200C).